Reading from the N-terminus, the 244-residue chain is Ribosome maturation factor RimM (244 aa).

Residues 1–58 (MSERDSGSSGPVKAKAAAPRAKTSGQAPFGAFVRKPVEKTEGKAKANAANAGSGATEM) are disordered. The span at 13–22 (KAKAAAPRAK) shows a compositional bias: low complexity. Residues 35-44 (KPVEKTEGKA) are compositionally biased toward basic and acidic residues. Positions 45–57 (KANAANAGSGATE) are enriched in low complexity. The PRC barrel domain maps to 163-244 (ADEFYWVDLL…QITVDWEADY (82 aa)).

This sequence belongs to the RimM family. As to quaternary structure, binds ribosomal protein uS19.

It is found in the cytoplasm. Its function is as follows. An accessory protein needed during the final step in the assembly of 30S ribosomal subunit, possibly for assembly of the head region. Essential for efficient processing of 16S rRNA. May be needed both before and after RbfA during the maturation of 16S rRNA. It has affinity for free ribosomal 30S subunits but not for 70S ribosomes. The sequence is that of Ribosome maturation factor RimM from Paraburkholderia xenovorans (strain LB400).